Here is a 37-residue protein sequence, read N- to C-terminus: Large ribosomal subunit protein bL36c (37 aa).

Belongs to the bacterial ribosomal protein bL36 family.

The protein localises to the plastid. It localises to the chloroplast. In Oltmannsiellopsis viridis (Marine flagellate), this protein is Large ribosomal subunit protein bL36c.